The chain runs to 85 residues: Small ribosomal subunit protein bS18A (85 aa).

The protein belongs to the bacterial ribosomal protein bS18 family. In terms of assembly, part of the 30S ribosomal subunit. Forms a tight heterodimer with protein bS6.

Binds as a heterodimer with protein bS6 to the central domain of the 16S rRNA, where it helps stabilize the platform of the 30S subunit. The protein is Small ribosomal subunit protein bS18A of Mycolicibacterium smegmatis (strain ATCC 700084 / mc(2)155) (Mycobacterium smegmatis).